A 320-amino-acid polypeptide reads, in one-letter code: Putative GDP-polyphosphate phosphotransferase PKK2A (320 aa).

Disordered stretches follow at residues 1-21 (MRKK…PKLD), 246-267 (RPLP…PPRD), and 281-320 (EERI…KSKK). The span at 12-21 (DFRKNPPKLD) shows a compositional bias: basic and acidic residues. Basic and acidic residues predominate over residues 281–290 (EERIKKEEKA).

This sequence belongs to the polyphosphate kinase 2 (PPK2) family. Class I subfamily.

It carries out the reaction [phosphate](n) + GTP = [phosphate](n+1) + GDP. The sequence is that of Putative GDP-polyphosphate phosphotransferase PKK2A from Corynebacterium glutamicum (strain ATCC 13032 / DSM 20300 / JCM 1318 / BCRC 11384 / CCUG 27702 / LMG 3730 / NBRC 12168 / NCIMB 10025 / NRRL B-2784 / 534).